The sequence spans 530 residues: UDP-glucuronosyltransferase 2B15 (530 aa).

Residues 1–23 (MSGKWISALLLLQISFCFKSGNC) form the signal peptide. Asparagine 316 carries an N-linked (GlcNAc...) asparagine glycan. Residues 494–510 (VIGFLLSCVAVTVVLAL) form a helical membrane-spanning segment.

This sequence belongs to the UDP-glycosyltransferase family. N-glycosylated. As to expression, liver. Lower levels seen in the kidney and testis.

It is found in the endoplasmic reticulum membrane. It carries out the reaction glucuronate acceptor + UDP-alpha-D-glucuronate = acceptor beta-D-glucuronoside + UDP + H(+). It catalyses the reaction 17alpha-estradiol + UDP-alpha-D-glucuronate = 17alpha-estradiol 3-O-(beta-D-glucuronate) + UDP + H(+). The enzyme catalyses 16alpha,17alpha-estriol + UDP-alpha-D-glucuronate = 16alpha,17alpha-estriol 3-O-(beta-D-glucuronate) + UDP + H(+). The catalysed reaction is 17beta-hydroxy-5alpha-androstan-3-one + UDP-alpha-D-glucuronate = 5alpha-dihydrotestosterone 17-O-(beta-D-glucuronate) + UDP + H(+). UDP-glucuronosyltransferase (UGT) that catalyzes phase II biotransformation reactions in which lipophilic substrates are conjugated with glucuronic acid to increase the metabolite's water solubility, thereby facilitating excretion into either the urine or bile. Essential for the elimination and detoxification of drugs, xenobiotics and endogenous compounds. Catalyzes the glucuronidation of endogenous steroid hormones such as androgens (testosterone, androsterone) and estrogens (estradiol, epiestradiol, estriol, catechol estrogens). Displays glucuronidation activity toward several classes of xenoblotic substrates, including phenolic compounds (eugenol, 4-nitrophenol, 4-hydroxybiphenyl) and phenylpropanoids (naringenin, coumarins). Catalyzes the glucuronidation of monoterpenoid alcohols such as borneol, menthol and isomenthol, a class of natural compounds used in essential oils. The chain is UDP-glucuronosyltransferase 2B15 from Rattus norvegicus (Rat).